Here is a 674-residue protein sequence, read N- to C-terminus: Kelch repeat and BTB domain-containing protein 6 (674 aa).

The segment at 1-28 (MQSREDAPRSRRLASPRGGKRPKKIHKP) is disordered. The span at 10-27 (SRRLASPRGGKRPKKIHK) shows a compositional bias: basic residues. The BTB domain maps to 63 to 138 (CDVTIEVVTP…CYTGRVSLSE (76 aa)). Kelch repeat units lie at residues 386 to 435 (AVCI…YLNG), 436 to 484 (YIYI…VIRD), 486 to 523 (LYALNSKRMFCYDPSHNMWLKCVSLKRNDFQEACVFNE), 524 to 564 (EIYC…IIKH), 567 to 616 (KLLL…CLSA), and 642 to 673 (TEWDLGGFSEPDSESGSSSSLSDDDFWVRVAP). The disordered stretch occupies residues 631–674 (TEEEEIPSESSTEWDLGGFSEPDSESGSSSSLSDDDFWVRVAPQ). The ATG8 interaction motif (AIM) signature appears at 668–671 (WVRV).

Core component of a BCR3 (BTB-CUL3-RBX1) E3 ubiquitin ligase complex, also named Cul3-RING ubiquitin ligase complex CUL3(KBTBD6/7), composed of CUL3, RBX1, KBTBD6 and KBTBD7. Interacts with GABARAP; the interaction is direct and is required for the ubiquitination of TIAM1. Interacts with GABARAPL1, GABARAPL2 and MAP1LC3B; the interaction is direct.

It is found in the cytoplasm. The protein resides in the nucleus. Its pathway is protein modification; protein ubiquitination. Its function is as follows. As part of the CUL3(KBTBD6/7) E3 ubiquitin ligase complex functions as a substrate adapter for the RAC1 guanine exchange factor (GEF) TIAM1, mediating its 'Lys-48' ubiquitination and proteasomal degradation. By controlling this ubiquitination, regulates RAC1 signal transduction and downstream biological processes including the organization of the cytoskeleton, cell migration and cell proliferation. Ubiquitination of TIAM1 requires the membrane-associated protein GABARAP which may restrict locally the activity of the complex. The chain is Kelch repeat and BTB domain-containing protein 6 from Homo sapiens (Human).